The sequence spans 364 residues: Putative methylthioribose-1-phosphate isomerase (364 aa).

Substrate-binding positions include 57 to 59, arginine 100, and glutamine 206; that span reads RGA. Catalysis depends on aspartate 247, which acts as the Proton donor. 257–258 contacts substrate; the sequence is NK.

The protein belongs to the eIF-2B alpha/beta/delta subunits family. MtnA subfamily.

It carries out the reaction 5-(methylsulfanyl)-alpha-D-ribose 1-phosphate = 5-(methylsulfanyl)-D-ribulose 1-phosphate. In terms of biological role, catalyzes the interconversion of methylthioribose-1-phosphate (MTR-1-P) into methylthioribulose-1-phosphate (MTRu-1-P). The chain is Putative methylthioribose-1-phosphate isomerase from Pyrococcus horikoshii (strain ATCC 700860 / DSM 12428 / JCM 9974 / NBRC 100139 / OT-3).